The chain runs to 305 residues: uncharacterized protein (305 aa).

The disordered stretch occupies residues 255-305 (RCHRAGLRSPPRTREPLWSLGPSGGEAAGEAPGGKGPPTPVLPHARRAGAA). Gly residues predominate over residues 276 to 288 (PSGGEAAGEAPGG).

This is an uncharacterized protein from Streptomyces fradiae (Streptomyces roseoflavus).